The sequence spans 38 residues: Mu-agatoxin-Hc1b (38 aa).

4 disulfide bridges follow: C3-C19, C10-C24, C18-C34, and C26-C32. Position 38 is a serine amide (S38).

Belongs to the neurotoxin 07 (Beta/delta-agtx) family. 02 (aga-3) subfamily. Expressed by the venom gland.

It is found in the secreted. Its function is as follows. Insecticidal neurotoxin that induces irreversible neuromuscular blockade in house crickets (A.domesticus). Modifies presynaptic voltage-gated sodium channels (Nav), causing them to open at the normal resting potential of the nerve. This leads to spontaneous release of neurotransmitter and repetitive action potentials in motor neurons. The polypeptide is Mu-agatoxin-Hc1b (Hololena curta (Funnel-web spider)).